The sequence spans 92 residues: Small ribosomal subunit protein uS19 (92 aa).

Belongs to the universal ribosomal protein uS19 family.

In terms of biological role, protein S19 forms a complex with S13 that binds strongly to the 16S ribosomal RNA. In Borrelia hermsii (strain HS1 / DAH), this protein is Small ribosomal subunit protein uS19.